The following is a 323-amino-acid chain: Probable cell division protein WhiA (323 aa).

Residues 275–309 (TLKELGEMLTTGQVSKSGINHRLRKLDQIAERLRS) constitute a DNA-binding region (H-T-H motif).

It belongs to the WhiA family.

Functionally, involved in cell division and chromosome segregation. This Listeria monocytogenes serotype 4a (strain HCC23) protein is Probable cell division protein WhiA.